The primary structure comprises 361 residues: S-adenosylmethionine:tRNA ribosyltransferase-isomerase (361 aa).

It belongs to the QueA family. In terms of assembly, monomer.

It is found in the cytoplasm. It catalyses the reaction 7-aminomethyl-7-carbaguanosine(34) in tRNA + S-adenosyl-L-methionine = epoxyqueuosine(34) in tRNA + adenine + L-methionine + 2 H(+). The protein operates within tRNA modification; tRNA-queuosine biosynthesis. Its function is as follows. Transfers and isomerizes the ribose moiety from AdoMet to the 7-aminomethyl group of 7-deazaguanine (preQ1-tRNA) to give epoxyqueuosine (oQ-tRNA). In Actinobacillus pleuropneumoniae serotype 5b (strain L20), this protein is S-adenosylmethionine:tRNA ribosyltransferase-isomerase.